We begin with the raw amino-acid sequence, 178 residues long: Interleukin-17B (178 aa).

Residues 1–22 (MDWPHSLLFLLAISIFLGPSQP) form the signal peptide. The tract at residues 21–44 (QPRNTKGKRKGQVRPGPLAPGPHQ) is disordered. A glycan (N-linked (GlcNAc...) asparagine) is linked at N75. Cystine bridges form between C121-C176 and C126-C178.

The protein belongs to the IL-17 family.

It localises to the secreted. Functionally, stimulates the release of tumor necrosis factor alpha and IL-1-beta from the monocytic cell line THP-1. This chain is Interleukin-17B (IL17B), found in Mesocricetus auratus (Golden hamster).